The chain runs to 287 residues: MAGAKEIRSKIASVQNTQKITKAMEMVAASKMRKSQDRMAASRPYAETMRKVIGHLAHGNLEYKHPYLEDRDVKRVGYLVVSTDRGLCGGLNINLFKKLLAEMKTWTDKGVQCDLAMIGSKGVSFFNSVGGNVVAQVTGMGDNPSLSELIGPVKVMLQAYDEGRLDKLYIVSNKFINTMSQVPTISQLLPLPASDDDDLKHKSWDYLYEPDPKALLDTLLRRYVESQVYQGVVENLASEQAARMVAMKAATDNGGSLIKELQLVYNKARQASITQELTEIVSGAAAV.

The protein belongs to the ATPase gamma chain family. As to quaternary structure, F-type ATPases have 2 components, CF(1) - the catalytic core - and CF(0) - the membrane proton channel. CF(1) has five subunits: alpha(3), beta(3), gamma(1), delta(1), epsilon(1). CF(0) has three main subunits: a, b and c.

Its subcellular location is the cell inner membrane. In terms of biological role, produces ATP from ADP in the presence of a proton gradient across the membrane. The gamma chain is believed to be important in regulating ATPase activity and the flow of protons through the CF(0) complex. In Escherichia fergusonii (strain ATCC 35469 / DSM 13698 / CCUG 18766 / IAM 14443 / JCM 21226 / LMG 7866 / NBRC 102419 / NCTC 12128 / CDC 0568-73), this protein is ATP synthase gamma chain.